Here is an 889-residue protein sequence, read N- to C-terminus: MLTKEDFRNKYQYHQATPMLQQYLDIKFTHQCCILLFRVGDFYELFFDDAIVVSKLLGLILAKKGKHAGQDLPMCGIPYHALESYLPRLVEQEHKVALCEQLESPEEAKKRNGYKAVVKREVVRIITSGTITEESLIKANVPNYLAAIVIHKDIASIGYCDVSTAEFIVIDVAIHNLTSELSRINPKEIILSESLQHNSGLLALFDNYKQKIVYQVESYFSFNKAQRVIQNYYEIITIDSIGSLNSTQVSAVGAILEYLSIMQKHSKSKLPFPQIVSYENFMLIDASARKNLELTSTLSGNFKGSLLSIIDATVTNQGGRLLHKFLSTPLAEVNLINSRLQITDFFYQNLQLVENLRQLVKLVPDIERALSRILIAKALPKDLESIKISLKIALSIKKELNKVLEEGNTPKYLEEIYNPLFGDNELYELLDSALLDDLSNSANDCGFIKSSYSTKLEELRNLIHNSSNFIEQLKLQYRQETCIETLKICHNNVWGMFIEVSSKNAHKITDSKFVHKQTTTTAVRFTTTELQTLEAKMLNAKTMAAALEQEILAELCKAISLKSEKLSHLAKSISLIDVFCNFAYISHEYNYCRPEITSDLAFNIVDGRHAVIEKLITKKHESFISNDCNLQNDQRIWLITGPNMAGKSTFLRQNAIIVILAQIGCYVPAQSAQIGVVDKLFSRIGAADDLASGQSTFMVEMVETSVILAQSTFMSLVILDEIGRGTSTYDGISIAWSCLEYIHSNIRCRCLFATHYHELVDLASKLLSLKNFTVKIHDSNDKLSFLYKIIEGAANKSYGIHVAELAGLPRIVLNRAKEILLELEHNKVNINQSNNNITKSIDIAVPPYPVKTIEIIKQLNPDQLTPKEALSIIYKIKNTILLEEDEKMI.

641-648 provides a ligand contact to ATP; the sequence is GPNMAGKS.

The protein belongs to the DNA mismatch repair MutS family.

In terms of biological role, this protein is involved in the repair of mismatches in DNA. It is possible that it carries out the mismatch recognition step. This protein has a weak ATPase activity. The sequence is that of DNA mismatch repair protein MutS from Orientia tsutsugamushi (strain Boryong) (Rickettsia tsutsugamushi).